A 355-amino-acid chain; its full sequence is Probable butyrate kinase (355 aa).

The protein belongs to the acetokinase family.

It is found in the cytoplasm. It catalyses the reaction butanoate + ATP = butanoyl phosphate + ADP. This is Probable butyrate kinase from Clostridium botulinum (strain Eklund 17B / Type B).